The sequence spans 666 residues: Long chain acyl-CoA synthetase 5 (666 aa).

ATP is bound at residue 228–239 (IMYTSGTTGDPK). The segment at 495 to 519 (DGWLHTGDVGEWQPNGSMKIIDRKK) is fatty acid-binding.

Belongs to the ATP-dependent AMP-binding enzyme family. It depends on Mg(2+) as a cofactor.

The catalysed reaction is a long-chain fatty acid + ATP + CoA = a long-chain fatty acyl-CoA + AMP + diphosphate. It functions in the pathway lipid metabolism; fatty acid metabolism. In terms of biological role, activation of long-chain fatty acids for both synthesis of cellular lipids, and degradation via beta-oxidation. Preferentially uses palmitate, palmitoleate, oleate and linoleate. In Arabidopsis thaliana (Mouse-ear cress), this protein is Long chain acyl-CoA synthetase 5 (LACS5).